The chain runs to 505 residues: Maturase K (505 aa).

It belongs to the intron maturase 2 family. MatK subfamily.

The protein resides in the plastid. It is found in the chloroplast. Functionally, usually encoded in the trnK tRNA gene intron. Probably assists in splicing its own and other chloroplast group II introns. In Apocynum androsaemifolium (Spreading dogbane), this protein is Maturase K.